The following is a 289-amino-acid chain: MRDRLPDLTACRTNDDGDTAVVIVEKDHFMDGFFHQVEEIRSSIARIAQHVEDVKKNHSIILSAPNPEGKIKEELEDLDKEIKKTANRIRGKLKSIEQSCDQDENGNRTSVDLRIRRTQHSVLSRKFVDVMTEYNEAQILFRERSKGRIQRQLEITGRTTTDDELEEMLESGKPSIFISDIISDSQITRQALNEIESRHKDIMKLETSIRELHEMFMDMAMFVETQGEMVNNIERNVVNSVDYVEHAKEETKKAIKYQSKARRKKWIIAAVAVAVIAVLALIIGLSVGK.

Residues 1-265 (MRDRLPDLTA…KYQSKARRKK (265 aa)) are Cytoplasmic-facing. A coiled-coil region spans residues 68–101 (EGKIKEELEDLDKEIKKTANRIRGKLKSIEQSCD). The t-SNARE coiled-coil homology domain occupies 192 to 254 (LNEIESRHKD…EHAKEETKKA (63 aa)). Residues 266–289 (WIIAAVAVAVIAVLALIIGLSVGK) form a helical; Anchor for type IV membrane protein membrane-spanning segment.

This sequence belongs to the syntaxin family. In terms of assembly, interacts with SYT6 and SYT8; the interaction is Ca(2+)-dependent.

The protein resides in the membrane. Its function is as follows. Essential for epithelial morphogenesis. May mediate Ca(2+)-regulation of exocytosis acrosomal reaction in sperm. The polypeptide is Syntaxin-2 (Stx2) (Mus musculus (Mouse)).